A 201-amino-acid chain; its full sequence is Large ribosomal subunit protein uL4 (201 aa).

The interval E51–V73 is disordered.

It belongs to the universal ribosomal protein uL4 family. Part of the 50S ribosomal subunit.

Its function is as follows. One of the primary rRNA binding proteins, this protein initially binds near the 5'-end of the 23S rRNA. It is important during the early stages of 50S assembly. It makes multiple contacts with different domains of the 23S rRNA in the assembled 50S subunit and ribosome. Functionally, forms part of the polypeptide exit tunnel. The chain is Large ribosomal subunit protein uL4 from Erwinia tasmaniensis (strain DSM 17950 / CFBP 7177 / CIP 109463 / NCPPB 4357 / Et1/99).